We begin with the raw amino-acid sequence, 102 residues long: Small ribosomal subunit protein uS10 (102 aa).

The protein belongs to the universal ribosomal protein uS10 family. In terms of assembly, part of the 30S ribosomal subunit.

Its function is as follows. Involved in the binding of tRNA to the ribosomes. The protein is Small ribosomal subunit protein uS10 of Streptococcus pneumoniae (strain CGSP14).